Here is a 196-residue protein sequence, read N- to C-terminus: Small ribosomal subunit protein uS4c (196 aa).

One can recognise an S4 RNA-binding domain in the interval 89 to 150 (MRLDNIVFRL…NQRSKRLVQN (62 aa)).

The protein belongs to the universal ribosomal protein uS4 family. As to quaternary structure, part of the 30S ribosomal subunit. Contacts protein S5. The interaction surface between S4 and S5 is involved in control of translational fidelity.

The protein resides in the plastid. The protein localises to the chloroplast. Its function is as follows. One of the primary rRNA binding proteins, it binds directly to 16S rRNA where it nucleates assembly of the body of the 30S subunit. Functionally, with S5 and S12 plays an important role in translational accuracy. This Eleusine indica (Goosegrass) protein is Small ribosomal subunit protein uS4c (rps4).